A 538-amino-acid polypeptide reads, in one-letter code: Putative cysteine ligase BshC (538 aa).

Residues 460–485 (KINEQIELLERMLKRNIEKKHEVELN) adopt a coiled-coil conformation.

The protein belongs to the BshC family.

Its function is as follows. Involved in bacillithiol (BSH) biosynthesis. May catalyze the last step of the pathway, the addition of cysteine to glucosamine malate (GlcN-Mal) to generate BSH. The polypeptide is Putative cysteine ligase BshC (Bacillus cereus (strain Q1)).